Consider the following 250-residue polypeptide: 5'-nucleotidase SurE (250 aa).

Residues Asp-9, Asp-10, Ser-40, and Asn-92 each coordinate a divalent metal cation.

It belongs to the SurE nucleotidase family. It depends on a divalent metal cation as a cofactor.

The protein resides in the cytoplasm. The catalysed reaction is a ribonucleoside 5'-phosphate + H2O = a ribonucleoside + phosphate. Functionally, nucleotidase that shows phosphatase activity on nucleoside 5'-monophosphates. The protein is 5'-nucleotidase SurE of Shewanella pealeana (strain ATCC 700345 / ANG-SQ1).